The sequence spans 368 residues: Anaphase-promoting complex subunit MND2 (368 aa).

2 disordered regions span residues 140–167 and 286–336; these read AQNA…NGSI and RNPY…GITP. Over residues 149-162 the composition is skewed to basic and acidic residues; the sequence is EDFRQHDSREEDPR. Ser293 is modified (phosphoserine).

The protein belongs to the APC15 family. The APC/C is composed of at least 13 subunits that stay tightly associated throughout the cell cycle: APC1, APC2, APC4, APC5, APC9, APC11, CDC16, CDC23, CDC26, CDC27, DOC1, MND2 and SWM1. MND2 interacts directly with APC1, APC5 and CDC23.

It participates in protein modification; protein ubiquitination. Component of the anaphase promoting complex/cyclosome (APC/C), a cell cycle-regulated E3 ubiquitin-protein ligase complex that controls progression through mitosis and the G1 phase of the cell cycle. The APC/C is thought to confer substrate specificity and, in the presence of ubiquitin-conjugating E2 enzymes, it catalyzes the formation of protein-ubiquitin conjugates that are subsequently degraded by the 26S proteasome. In early mitosis, the APC/C is activated by CDC20 and targets securin PDS1, the B-type cyclin CLB5, and other anaphase inhibitory proteins for proteolysis, thereby triggering the separation of sister chromatids at the metaphase-to-anaphase transition. In late mitosis and in G1, degradation of CLB5 allows activation of the APC/C by CDH1, which is needed to destroy CDC20 and the B-type cyclin CLB2 to allow exit from mitosis and creating the low CDK state necessary for cytokinesis and for reforming prereplicative complexes in G1 prior to another round of replication. This Saccharomyces cerevisiae (strain ATCC 204508 / S288c) (Baker's yeast) protein is Anaphase-promoting complex subunit MND2 (MND2).